Reading from the N-terminus, the 228-residue chain is Aspartate racemase (228 aa).

47 to 49 provides a ligand contact to substrate; that stretch reads DRT. Cysteine 82 functions as the Proton donor/acceptor in the catalytic mechanism. Substrate contacts are provided by residues 83–85 and lysine 164; that span reads NTA. Cysteine 194 (proton donor/acceptor) is an active-site residue.

Belongs to the aspartate/glutamate racemases family. Homodimer. The existence of the interchain disulfide bond seen in the crystal structures is uncertain, but disulfide bonds have been reported for cytoplasmic proteins from thermophiles.

The catalysed reaction is L-aspartate = D-aspartate. With respect to regulation, weakly inhibited by citrate, but not by asparagine. This is Aspartate racemase from Pyrococcus horikoshii (strain ATCC 700860 / DSM 12428 / JCM 9974 / NBRC 100139 / OT-3).